Consider the following 171-residue polypeptide: UPF0312 protein SAV2687 (171 aa).

The protein belongs to the UPF0312 family.

This Staphylococcus aureus (strain Mu50 / ATCC 700699) protein is UPF0312 protein SAV2687.